A 178-amino-acid chain; its full sequence is Photosystem II extrinsic protein V (178 aa).

The signal sequence occupies residues 1–38 (MFSKFFSLQKAFAAARRRLLILILVLGMAGYAWGPALA). Positions 71, 74, 75, and 126 each coordinate heme c.

Belongs to the cytochrome c family. PsbV subfamily. PSII is composed of 1 copy each of membrane proteins PsbA, PsbB, PsbC, PsbD, PsbE, PsbF, PsbH, PsbI, PsbJ, PsbK, PsbL, PsbM, PsbT, PsbX, PsbY, PsbZ, Psb30/Ycf12, peripheral proteins PsbO, CyanoQ (PsbQ), PsbU, PsbV and a large number of cofactors. It forms dimeric complexes. Heme c serves as cofactor.

Its subcellular location is the cellular thylakoid membrane. In terms of biological role, one of the extrinsic, lumenal subunits of photosystem II (PSII). PSII is a light-driven water plastoquinone oxidoreductase, using light energy to abstract electrons from H(2)O, generating a proton gradient subsequently used for ATP formation. The extrinsic proteins stabilize the structure of photosystem II oxygen-evolving complex (OEC), the ion environment of oxygen evolution and protect the OEC against heat-induced inactivation. Low-potential cytochrome c that plays a role in the OEC of PSII. This is Photosystem II extrinsic protein V from Synechococcus sp. (strain JA-3-3Ab) (Cyanobacteria bacterium Yellowstone A-Prime).